A 177-amino-acid chain; its full sequence is Parathyroid hormone-related protein (177 aa).

Positions 1 to 24 are cleaved as a signal peptide; sequence MLRRLVQQWSVLVFLLSYSVPSRG. The propeptide occupies 25–34; the sequence is RSVEGLGRRL. An important for receptor binding region spans residues 57 to 68; that stretch reads RFFLHHLIAEIH. Positions 74–177 are disordered; that stretch reads ATSEVSPNSK…TSLEPSSRTH (104 aa). The segment covering 76–90 has biased composition (polar residues); that stretch reads SEVSPNSKPAPNTKN. A Nuclear localization signal motif is present at residues 108 to 129; that stretch reads TNKVETYKEQPLKTPGKKKKGK. Positions 109-118 are enriched in basic and acidic residues; the sequence is NKVETYKEQP. Over residues 122–132 the composition is skewed to basic residues; that stretch reads PGKKKKGKPGK. The segment covering 161-177 has biased composition (low complexity); it reads PHTSPTSTSLEPSSRTH.

The protein belongs to the parathyroid hormone family. PTHrP interacts with PTH1R (via N-terminal extracellular domain). Post-translationally, there are several secretory forms, including osteostatin, arising from endoproteolytic cleavage of the initial translation product. Each of these secretory forms is believed to have one or more of its own receptors that mediates the normal paracrine, autocrine and endocrine actions.

Its subcellular location is the secreted. It localises to the cytoplasm. It is found in the nucleus. In terms of biological role, neuroendocrine peptide which is a critical regulator of cellular and organ growth, development, migration, differentiation and survival and of epithelial calcium ion transport. Acts by binding to its receptor, PTH1R, activating G protein-coupled receptor signaling. Regulates endochondral bone development and epithelial-mesenchymal interactions during the formation of the mammary glands and teeth. Required for skeletal homeostasis. Promotes mammary mesenchyme differentiation and bud outgrowth by modulating mesenchymal cell responsiveness to BMPs. Up-regulates BMPR1A expression in the mammary mesenchyme and this increases the sensitivity of these cells to BMPs and allows them to respond to BMP4 in a paracrine and/or autocrine fashion. BMP4 signaling in the mesenchyme, in turn, triggers epithelial outgrowth and augments MSX2 expression, which causes the mammary mesenchyme to inhibit hair follicle formation within the nipple sheath. Functionally, potent inhibitor of osteoclastic bone resorption. In Rattus norvegicus (Rat), this protein is Parathyroid hormone-related protein (Pthlh).